A 339-amino-acid chain; its full sequence is Glycerol-3-phosphate dehydrogenase [NAD(P)+] (339 aa).

NADPH-binding residues include Ser-15, Tyr-16, His-36, and Lys-110. Residues Lys-110, Gly-139, and Thr-141 each coordinate sn-glycerol 3-phosphate. Ala-143 lines the NADPH pocket. Positions 195, 248, 258, 259, and 260 each coordinate sn-glycerol 3-phosphate. Residue Lys-195 is the Proton acceptor of the active site. Arg-259 contributes to the NADPH binding site. Val-283 and Glu-285 together coordinate NADPH.

It belongs to the NAD-dependent glycerol-3-phosphate dehydrogenase family.

The protein localises to the cytoplasm. It catalyses the reaction sn-glycerol 3-phosphate + NAD(+) = dihydroxyacetone phosphate + NADH + H(+). It carries out the reaction sn-glycerol 3-phosphate + NADP(+) = dihydroxyacetone phosphate + NADPH + H(+). Its pathway is membrane lipid metabolism; glycerophospholipid metabolism. In terms of biological role, catalyzes the reduction of the glycolytic intermediate dihydroxyacetone phosphate (DHAP) to sn-glycerol 3-phosphate (G3P), the key precursor for phospholipid synthesis. This Citrobacter koseri (strain ATCC BAA-895 / CDC 4225-83 / SGSC4696) protein is Glycerol-3-phosphate dehydrogenase [NAD(P)+].